A 115-amino-acid chain; its full sequence is Iron-sulfur cluster insertion protein ErpA (115 aa).

The iron-sulfur cluster site is built by Cys-43, Cys-107, and Cys-109.

Belongs to the HesB/IscA family. In terms of assembly, homodimer. It depends on iron-sulfur cluster as a cofactor.

In terms of biological role, required for insertion of 4Fe-4S clusters for at least IspG. This chain is Iron-sulfur cluster insertion protein ErpA, found in Photorhabdus laumondii subsp. laumondii (strain DSM 15139 / CIP 105565 / TT01) (Photorhabdus luminescens subsp. laumondii).